A 290-amino-acid chain; its full sequence is 4-hydroxybenzoate octaprenyltransferase (290 aa).

The next 8 helical transmembrane spans lie at 33 to 53, 91 to 111, 116 to 136, 138 to 158, 165 to 185, 212 to 232, 237 to 257, and 269 to 289; these read LAAL…AVFV, LGVR…FVLV, WEAV…PFTK, FFAM…VIAF, VPAT…AYDT, VAAI…VLAP, WPLW…FTLI, and FSKS…GYLL.

This sequence belongs to the UbiA prenyltransferase family. Mg(2+) is required as a cofactor.

It is found in the cell inner membrane. The catalysed reaction is all-trans-octaprenyl diphosphate + 4-hydroxybenzoate = 4-hydroxy-3-(all-trans-octaprenyl)benzoate + diphosphate. It participates in cofactor biosynthesis; ubiquinone biosynthesis. Its function is as follows. Catalyzes the prenylation of para-hydroxybenzoate (PHB) with an all-trans polyprenyl group. Mediates the second step in the final reaction sequence of ubiquinone-8 (UQ-8) biosynthesis, which is the condensation of the polyisoprenoid side chain with PHB, generating the first membrane-bound Q intermediate 3-octaprenyl-4-hydroxybenzoate. In Acidovorax ebreus (strain TPSY) (Diaphorobacter sp. (strain TPSY)), this protein is 4-hydroxybenzoate octaprenyltransferase.